The sequence spans 396 residues: Phosphopentomutase (396 aa).

Asp-13, Asp-288, His-293, Asp-329, His-330, and His-341 together coordinate Mn(2+).

The protein belongs to the phosphopentomutase family. The cofactor is Mn(2+).

The protein localises to the cytoplasm. It carries out the reaction 2-deoxy-alpha-D-ribose 1-phosphate = 2-deoxy-D-ribose 5-phosphate. It catalyses the reaction alpha-D-ribose 1-phosphate = D-ribose 5-phosphate. Its pathway is carbohydrate degradation; 2-deoxy-D-ribose 1-phosphate degradation; D-glyceraldehyde 3-phosphate and acetaldehyde from 2-deoxy-alpha-D-ribose 1-phosphate: step 1/2. Functionally, isomerase that catalyzes the conversion of deoxy-ribose 1-phosphate (dRib-1-P) and ribose 1-phosphate (Rib-1-P) to deoxy-ribose 5-phosphate (dRib-5-P) and ribose 5-phosphate (Rib-5-P), respectively. The protein is Phosphopentomutase of Clostridium botulinum (strain Alaska E43 / Type E3).